We begin with the raw amino-acid sequence, 353 residues long: Photosystem II protein D1 (353 aa).

Threonine 2 carries the post-translational modification N-acetylthreonine. Threonine 2 is modified (phosphothreonine). Helical transmembrane passes span 29 to 46 (YIGW…TATS), 118 to 133 (HFLL…EWEL), and 142 to 156 (WIAV…AATA). Chlorophyll a is bound at residue histidine 118. Tyrosine 126 contributes to the pheophytin a binding site. [CaMn4O5] cluster-binding residues include aspartate 170 and glutamate 189. Residues 197–218 (FHMLGVAGVFGGSLFSAMHGSL) form a helical membrane-spanning segment. Chlorophyll a is bound at residue histidine 198. A quinone is bound by residues histidine 215 and 264-265 (SF). Histidine 215 contacts Fe cation. Fe cation is bound at residue histidine 272. Residues 274 to 288 (FLAAWPVVGIWFTAL) traverse the membrane as a helical segment. 4 residues coordinate [CaMn4O5] cluster: histidine 332, glutamate 333, aspartate 342, and alanine 344. The propeptide occupies 345-353 (AVEAPSTNG).

Belongs to the reaction center PufL/M/PsbA/D family. PSII is composed of 1 copy each of membrane proteins PsbA, PsbB, PsbC, PsbD, PsbE, PsbF, PsbH, PsbI, PsbJ, PsbK, PsbL, PsbM, PsbT, PsbX, PsbY, PsbZ, Psb30/Ycf12, at least 3 peripheral proteins of the oxygen-evolving complex and a large number of cofactors. It forms dimeric complexes. The cofactor is The D1/D2 heterodimer binds P680, chlorophylls that are the primary electron donor of PSII, and subsequent electron acceptors. It shares a non-heme iron and each subunit binds pheophytin, quinone, additional chlorophylls, carotenoids and lipids. D1 provides most of the ligands for the Mn4-Ca-O5 cluster of the oxygen-evolving complex (OEC). There is also a Cl(-1) ion associated with D1 and D2, which is required for oxygen evolution. The PSII complex binds additional chlorophylls, carotenoids and specific lipids.. Post-translationally, tyr-161 forms a radical intermediate that is referred to as redox-active TyrZ, YZ or Y-Z. In terms of processing, C-terminally processed by CTPA; processing is essential to allow assembly of the oxygen-evolving complex and thus photosynthetic growth.

Its subcellular location is the plastid. The protein localises to the chloroplast thylakoid membrane. It catalyses the reaction 2 a plastoquinone + 4 hnu + 2 H2O = 2 a plastoquinol + O2. Functionally, photosystem II (PSII) is a light-driven water:plastoquinone oxidoreductase that uses light energy to abstract electrons from H(2)O, generating O(2) and a proton gradient subsequently used for ATP formation. It consists of a core antenna complex that captures photons, and an electron transfer chain that converts photonic excitation into a charge separation. The D1/D2 (PsbA/PsbD) reaction center heterodimer binds P680, the primary electron donor of PSII as well as several subsequent electron acceptors. This chain is Photosystem II protein D1, found in Nymphaea alba (White water-lily).